We begin with the raw amino-acid sequence, 114 residues long: Adapter SH3BGRL (114 aa).

The interval 13 to 50 (SMAIKKKQQDVLGFLEANKIGFEEKDIAANEENRKWMR) is required for interaction with HER2. The tract at residues 54-71 (PENSRPATGYPLPPQIFN) is required for interaction with PFN1, HER2, and ATG12. The SH3-binding signature appears at 61–67 (TGYPLPP).

This sequence belongs to the SH3BGR family. In terms of assembly, monomer. Interacts with PFN1/Profilin-1. Interacts with ERBB2. Interacts with ATG12. Interacts with BECN1. Interacts with translating ribosomes.

The protein resides in the cytoplasm. Its subcellular location is the cytosol. The protein localises to the cell membrane. In terms of biological role, appears to function as an adapter protein that bridges proteins together or proteins with mRNAs. May function as a ubiquitin ligase-substrate adapter. Additionally, associates with translating cytoplasmic ribosomes and may promote the expression of specific mRNAs. This is Adapter SH3BGRL (SH3BGRL) from Bos taurus (Bovine).